Reading from the N-terminus, the 61-residue chain is Small ribosomal subunit protein uS14 (61 aa).

4 residues coordinate Zn(2+): Cys24, Cys27, Cys40, and Cys43.

The protein belongs to the universal ribosomal protein uS14 family. Zinc-binding uS14 subfamily. In terms of assembly, part of the 30S ribosomal subunit. Contacts proteins S3 and S10. Zn(2+) serves as cofactor.

In terms of biological role, binds 16S rRNA, required for the assembly of 30S particles and may also be responsible for determining the conformation of the 16S rRNA at the A site. The polypeptide is Small ribosomal subunit protein uS14 (Campylobacter lari (strain RM2100 / D67 / ATCC BAA-1060)).